A 247-amino-acid polypeptide reads, in one-letter code: Carboxy-S-adenosyl-L-methionine synthase (247 aa).

Residues tyrosine 40, 65–67, 90–91, 122–123, asparagine 137, and arginine 204 each bind S-adenosyl-L-methionine; these read GSS, DN, and DI.

Belongs to the class I-like SAM-binding methyltransferase superfamily. Cx-SAM synthase family. In terms of assembly, homodimer.

The enzyme catalyses prephenate + S-adenosyl-L-methionine = carboxy-S-adenosyl-L-methionine + 3-phenylpyruvate + H2O. Functionally, catalyzes the conversion of S-adenosyl-L-methionine (SAM) to carboxy-S-adenosyl-L-methionine (Cx-SAM). In Pseudomonas savastanoi pv. phaseolicola (strain 1448A / Race 6) (Pseudomonas syringae pv. phaseolicola (strain 1448A / Race 6)), this protein is Carboxy-S-adenosyl-L-methionine synthase.